The chain runs to 151 residues: Phosphopantetheine adenylyltransferase (151 aa).

Residue Ser9 coordinates substrate. ATP is bound by residues 9–10 (SF) and His17. 3 residues coordinate substrate: Lys41, Thr73, and Arg87. ATP is bound by residues 88–90 (GLR), Glu98, and 122–128 (TSFISSS).

Belongs to the bacterial CoaD family. In terms of assembly, homohexamer. The cofactor is Mg(2+).

The protein resides in the cytoplasm. It catalyses the reaction (R)-4'-phosphopantetheine + ATP + H(+) = 3'-dephospho-CoA + diphosphate. Its pathway is cofactor biosynthesis; coenzyme A biosynthesis; CoA from (R)-pantothenate: step 4/5. In terms of biological role, reversibly transfers an adenylyl group from ATP to 4'-phosphopantetheine, yielding dephospho-CoA (dPCoA) and pyrophosphate. This Flavobacterium psychrophilum (strain ATCC 49511 / DSM 21280 / CIP 103535 / JIP02/86) protein is Phosphopantetheine adenylyltransferase.